The chain runs to 415 residues: Multifunctional CCA protein (415 aa).

ATP-binding residues include Gly8 and Arg11. Positions 8 and 11 each coordinate CTP. Positions 21 and 23 each coordinate Mg(2+). ATP is bound by residues Arg91, Arg143, and Arg146. The CTP site is built by Arg91, Arg143, and Arg146. Positions 232-333 constitute an HD domain; that stretch reads TGVHVMMVID…VRLLERCDAL (102 aa).

The protein belongs to the tRNA nucleotidyltransferase/poly(A) polymerase family. Bacterial CCA-adding enzyme type 1 subfamily. In terms of assembly, monomer. Can also form homodimers and oligomers. Requires Mg(2+) as cofactor. It depends on Ni(2+) as a cofactor.

It catalyses the reaction a tRNA precursor + 2 CTP + ATP = a tRNA with a 3' CCA end + 3 diphosphate. The catalysed reaction is a tRNA with a 3' CCA end + 2 CTP + ATP = a tRNA with a 3' CCACCA end + 3 diphosphate. Functionally, catalyzes the addition and repair of the essential 3'-terminal CCA sequence in tRNAs without using a nucleic acid template. Adds these three nucleotides in the order of C, C, and A to the tRNA nucleotide-73, using CTP and ATP as substrates and producing inorganic pyrophosphate. tRNA 3'-terminal CCA addition is required both for tRNA processing and repair. Also involved in tRNA surveillance by mediating tandem CCA addition to generate a CCACCA at the 3' terminus of unstable tRNAs. While stable tRNAs receive only 3'-terminal CCA, unstable tRNAs are marked with CCACCA and rapidly degraded. This is Multifunctional CCA protein from Cupriavidus taiwanensis (strain DSM 17343 / BCRC 17206 / CCUG 44338 / CIP 107171 / LMG 19424 / R1) (Ralstonia taiwanensis (strain LMG 19424)).